Reading from the N-terminus, the 550-residue chain is Pectinesterase 2.2 (550 aa).

Asn-179 carries N-linked (GlcNAc...) asparagine glycosylation. Substrate contacts are provided by Thr-312 and Gln-342. A disulfide bridge links Cys-331 with Cys-358. Catalysis depends on Asp-365, which acts as the Proton donor. Asp-386 serves as the catalytic Nucleophile. Cys-399 and Cys-433 are oxidised to a cystine. 2 residues coordinate substrate: Arg-454 and Trp-456.

It in the N-terminal section; belongs to the PMEI family. This sequence in the C-terminal section; belongs to the pectinesterase family.

The protein localises to the secreted. It localises to the cell wall. It catalyses the reaction [(1-&gt;4)-alpha-D-galacturonosyl methyl ester](n) + n H2O = [(1-&gt;4)-alpha-D-galacturonosyl](n) + n methanol + n H(+). Its pathway is glycan metabolism; pectin degradation; 2-dehydro-3-deoxy-D-gluconate from pectin: step 1/5. Pectinesterase may play a role in cell wall metabolism during fruit growth and development prior to ripening and may be required for preparing cell walls for softening by polygalacturonase during fruit ripening. The sequence is that of Pectinesterase 2.2 (PME2.2) from Solanum lycopersicum (Tomato).